A 523-amino-acid chain; its full sequence is 2-hydroxyisoflavanone synthase (523 aa).

A helical transmembrane segment spans residues 2 to 22 (LVELAITLLVIALFIHLRPTP). C450 provides a ligand contact to heme.

This sequence belongs to the cytochrome P450 family. Heme serves as cofactor.

Its subcellular location is the microsome membrane. It carries out the reaction (2S)-liquiritigenin + reduced [NADPH--hemoprotein reductase] + O2 = (2R,3S)-2,4',7-trihydroxyisoflavanone + oxidized [NADPH--hemoprotein reductase] + H2O + H(+). The catalysed reaction is (2S)-naringenin + reduced [NADPH--hemoprotein reductase] + O2 = 2-hydroxy-2,3-dihydrogenistein + oxidized [NADPH--hemoprotein reductase] + H2O + H(+). Functionally, 2-hydroxyisoflavanone synthase, which catalyzes the hydroxylation associated with 1,2-aryl migration of flavanones. Converts liquiritigenin and naringenin into highly unstable precursors of the isoflavones daidzein and genistein. In Glycyrrhiza uralensis (Chinese licorice), this protein is 2-hydroxyisoflavanone synthase (CYP93C2).